The chain runs to 346 residues: Tetraacyldisaccharide 4'-kinase (346 aa).

An ATP-binding site is contributed by Thr-54–Thr-61.

It belongs to the LpxK family.

It catalyses the reaction a lipid A disaccharide + ATP = a lipid IVA + ADP + H(+). The protein operates within glycolipid biosynthesis; lipid IV(A) biosynthesis; lipid IV(A) from (3R)-3-hydroxytetradecanoyl-[acyl-carrier-protein] and UDP-N-acetyl-alpha-D-glucosamine: step 6/6. Transfers the gamma-phosphate of ATP to the 4'-position of a tetraacyldisaccharide 1-phosphate intermediate (termed DS-1-P) to form tetraacyldisaccharide 1,4'-bis-phosphate (lipid IVA). The sequence is that of Tetraacyldisaccharide 4'-kinase from Sinorhizobium medicae (strain WSM419) (Ensifer medicae).